The following is a 145-amino-acid chain: Salt stress-induced protein (145 aa).

The 143-residue stretch at 3–145 (LVKIGLWGGN…IDAIGIYVHP (143 aa)) folds into the Jacalin-type lectin domain. Repeat copies occupy residues 6–15 (IGLWGGNGGS) and 54–64 (IGPWGGGEGTS). The 2 X approximate repeats, Gly-rich stretch occupies residues 6-64 (IGLWGGNGGSAQDISVPPKKLLGVTIYSSDAIRSIAFNYIGVDGQEYAIGPWGGGEGTS).

As to expression, sheaths and roots from mature plants and seedlings.

The sequence is that of Salt stress-induced protein (SALT) from Oryza sativa subsp. indica (Rice).